Consider the following 229-residue polypeptide: Potassium/proton antiporter CemA (229 aa).

3 helical membrane-spanning segments follow: residues phenylalanine 7 to valine 27, isoleucine 107 to glycine 127, and isoleucine 189 to isoleucine 209.

This sequence belongs to the CemA family.

It localises to the plastid. It is found in the chloroplast inner membrane. The catalysed reaction is K(+)(in) + H(+)(out) = K(+)(out) + H(+)(in). Contributes to K(+)/H(+) antiport activity by supporting proton efflux to control proton extrusion and homeostasis in chloroplasts in a light-dependent manner to modulate photosynthesis. Prevents excessive induction of non-photochemical quenching (NPQ) under continuous-light conditions. Indirectly promotes efficient inorganic carbon uptake into chloroplasts. This Nicotiana sylvestris (Wood tobacco) protein is Potassium/proton antiporter CemA.